A 152-amino-acid chain; its full sequence is 3-hydroxyacyl-[acyl-carrier-protein] dehydratase FabZ (152 aa).

Residue histidine 57 is part of the active site.

The protein belongs to the thioester dehydratase family. FabZ subfamily.

It is found in the cytoplasm. The catalysed reaction is a (3R)-hydroxyacyl-[ACP] = a (2E)-enoyl-[ACP] + H2O. Functionally, involved in unsaturated fatty acids biosynthesis. Catalyzes the dehydration of short chain beta-hydroxyacyl-ACPs and long chain saturated and unsaturated beta-hydroxyacyl-ACPs. The protein is 3-hydroxyacyl-[acyl-carrier-protein] dehydratase FabZ of Bradyrhizobium sp. (strain ORS 278).